We begin with the raw amino-acid sequence, 513 residues long: MVWEVKTNQRPHAVQRLLLVMDERATGVSDSLELLQCNENVPSSPGYNSCDEHMELDDLPELQAVQSDPTQSAIYQLSSDVSHQEYPRPSWSQNTSDIPENTHREDEVDWLTELANIATSPQSPLMQCSFYNRSSPVHIIATSKSLHSYARPPPVSSAKSGPAFPHDHWKEETPVRHERANSESESGIFCMSSLSDDDDLGWCNSWPSTVWHCFLKGTRLCFHKESKKEWQDVEDFARAASCDEEEIQMGTHKGYGSDGLKLLSHEESVSFGESVLKLTFDPGTVEDGLLTVECKLDHPFYVKNKGWSSFYPSLTVVQHGIPCCEIHIGDVCLPPGHPDAINFDDSGVFDTFKSYDFTPMDSSAVYVLSSMARQRRASLSCGGPGTGQEFAGSEFSKSCGSPGSSQLSSSSLYTKAVKSHSSGTVSATSPNKCKRPMNAFMLFAKKYRVEYTQMYPGKDNRAISVILGDRWKKMKNEERRMYTLEAKALAEEQKRLNPDCWKRKRTNSGSQQH.

Residues 151–181 form a disordered region; sequence RPPPVSSAKSGPAFPHDHWKEETPVRHERAN. The segment covering 165 to 181 has biased composition (basic and acidic residues); that stretch reads PHDHWKEETPVRHERAN. One can recognise an AXH domain in the interval 202-343; it reads WCNSWPSTVW…PPGHPDAINF (142 aa). A DNA-binding region (HMG box) is located at residues 433 to 501; the sequence is CKRPMNAFML…EQKRLNPDCW (69 aa).

Binds TCF4. Binds RB1. Binds the second PAH repeat of SIN3A. Ubiquitinated by the CTLH E3 ubiquitin-protein ligase complex, leading to subsequent proteasomal degradation. In terms of tissue distribution, highly expressed in liver, adipose tissue, lung, brain, spleen, kidney, skeletal muscle and heart.

The protein localises to the nucleus. Its function is as follows. Transcriptional repressor that binds to the promoter region of target genes. Plays a role in the regulation of the cell cycle and of the Wnt pathway. Binds preferentially to the sequence 5'-TTCATTCATTCA-3'. Binding to the histone H1.0 promoter is enhanced by interaction with RB1. Disrupts the interaction between DNA and TCF4. This is HMG box-containing protein 1 (Hbp1) from Rattus norvegicus (Rat).